The chain runs to 400 residues: Large envelope protein (400 aa).

Met1 bears the N-acetylmethionine mark. Gly2 is lipidated: N-myristoyl glycine; by host. The segment at 2–119 (GAPLSTTRRG…PPLRDTHPQA (118 aa)) is pre-S1. The pre-S stretch occupies residues 2-174 (GAPLSTTRRG…FLKTGGPATN (173 aa)). Topologically, residues 2-181 (GAPLSTTRRG…ATNMDNITSG (180 aa)) are virion surface; in external conformation. At 2-253 (GAPLSTTRRG…PGYRWMCLRR (252 aa)) the chain is on the intravirion; in internal conformation side. A glycan (N-linked (GlcNAc...) asparagine) is linked at Pro4. The tract at residues 84–114 (VLTTLPADPPPASTNRRSGRKPTPVSPPLRD) is disordered. Residues 120 to 174 (MQWNSTQFHQALLDPRVRALYFPAGGSSSETQNPAPTIASLTSSIFLKTGGPATN) are pre-S2. The helical transmembrane segment at 182–202 (LLGPLLVLQAVCFLLTKILTI) threads the bilayer. The Intravirion; in external conformation portion of the chain corresponds to 203-253 (PQSLDSWWTSLNFLGGTPGCPGQNSQSPTSNHLPTSCPPTCPGYRWMCLRR). Residues 254-274 (FIIFLFILLLCLIFLLVLVDY) form a helical membrane-spanning segment. Topologically, residues 275-348 (QGMLPVCPPL…WASARFSWLS (74 aa)) are virion surface. Residue Asn320 is glycosylated (N-linked (GlcNAc...) asparagine; by host). Residues 349-369 (LLVQFVQWCVGLSPTVWLLVI) traverse the membrane as a helical segment. Residues 370–375 (WMIWYW) lie on the Intravirion side of the membrane. Residues 376–398 (GPNLCSILSPFIPLLPIFCYLWV) form a helical membrane-spanning segment. At 399-400 (SI) the chain is on the virion surface side.

This sequence belongs to the orthohepadnavirus major surface antigen family. In terms of assembly, in its internal form (Li-HBsAg), interacts with the capsid protein and with the isoform S. Interacts with host chaperone CANX. Associates with host chaperone CANX through its pre-S2 N glycan; this association may be essential for isoform M proper secretion. As to quaternary structure, interacts with isoform L. Interacts with the antigens of satellite virus HDV (HDVAgs); this interaction is required for encapsidation of HDV genomic RNA. In terms of processing, isoform M is N-terminally acetylated by host at a ratio of 90%, and N-glycosylated by host at the pre-S2 region. Post-translationally, myristoylated.

The protein resides in the virion membrane. In terms of biological role, the large envelope protein exists in two topological conformations, one which is termed 'external' or Le-HBsAg and the other 'internal' or Li-HBsAg. In its external conformation the protein attaches the virus to cell receptors and thereby initiating infection. This interaction determines the species specificity and liver tropism. This attachment induces virion internalization predominantly through caveolin-mediated endocytosis. The large envelope protein also assures fusion between virion membrane and endosomal membrane. In its internal conformation the protein plays a role in virion morphogenesis and mediates the contact with the nucleocapsid like a matrix protein. The middle envelope protein plays an important role in the budding of the virion. It is involved in the induction of budding in a nucleocapsid independent way. In this process the majority of envelope proteins bud to form subviral lipoprotein particles of 22 nm of diameter that do not contain a nucleocapsid. The chain is Large envelope protein from Homo sapiens (Human).